Consider the following 140-residue polypeptide: Transmembrane protein 234 (140 aa).

3 helical membrane-spanning segments follow: residues 1–21 (MAAS…WGGT), 82–102 (LAVP…GKVL), and 111–131 (AVAG…SSVS).

Belongs to the TMEM234 family.

The protein resides in the membrane. This is Transmembrane protein 234 (Tmem234) from Mus musculus (Mouse).